The following is a 248-amino-acid chain: Putative mutator protein MutT4 (248 aa).

The interval 1 to 64 (MSDGEQAKSR…GSTRMRTVHE (64 aa)) is disordered. Positions 9-20 (SRRRRGRRRGRR) are enriched in basic residues. Low complexity predominate over residues 31 to 44 (AQPAGDATPTPATA). Over residues 45-57 (KRSRSRSPRRGST) the composition is skewed to basic residues. The Nudix hydrolase domain maps to 62 to 198 (VHETSAGGLV…DERRLAEVAD (137 aa)). Mg(2+) contacts are provided by G103, E118, E121, and E122. The Nudix box signature appears at 103-124 (GHIELGETAEQTAIREVAEETG). Residues 204–248 (LQSDGPAALPPLPPSSPRRRPQTHSRARHADDSAPGQHNGPGPGP) are disordered. Residues 220-230 (PRRRPQTHSRA) show a composition bias toward basic residues.

This sequence belongs to the Nudix hydrolase family. The cofactor is Mg(2+). Requires Mn(2+) as cofactor.

In terms of biological role, may be involved in the GO system responsible for removing an oxidatively damaged form of guanine (7,8-dihydro-8-oxoguanine, 8-oxo-dGTP) from DNA and the nucleotide pool. This chain is Putative mutator protein MutT4 (mutT4), found in Mycobacterium tuberculosis (strain CDC 1551 / Oshkosh).